A 367-amino-acid chain; its full sequence is Outer membrane protein assembly factor BamC (367 aa).

The signal sequence occupies residues 1-16; sequence MRLLPLFLMVTLAASG. C17 carries the N-palmitoyl cysteine lipid modification. The S-diacylglycerol cysteine moiety is linked to residue C17.

This sequence belongs to the BamC family. In terms of assembly, part of the Bam complex.

The protein resides in the cell outer membrane. Part of the outer membrane protein assembly complex, which is involved in assembly and insertion of beta-barrel proteins into the outer membrane. This chain is Outer membrane protein assembly factor BamC, found in Thiobacillus denitrificans (strain ATCC 25259 / T1).